A 366-amino-acid chain; its full sequence is DNA repair protein RAD51 homolog 3 (366 aa).

The segment at 1 to 117 (MQRELVSFPL…LMKTTEVCGV (117 aa)) is required for Holliday junction resolution activity. The residue at position 11 (Ser-11) is a Phosphoserine. Positions 70 to 127 (SVAGKKYTALELLEQEHTQGFIITFCSALDNILGGGIPLMKTTEVCGVPGVGKTQLCM) are interaction with RAD51B, RAD51D and XRCC3. 116-123 (GVPGVGKT) lines the ATP pocket. Residues 338-366 (RDAAVTASSSQTEGSSNLRKRSREPEEGC) are disordered. Polar residues predominate over residues 343–354 (TASSSQTEGSSN). A Nuclear localization signal motif is present at residues 356-360 (RKRSR).

The protein belongs to the RecA family. RAD51 subfamily. In terms of assembly, part of the RAD51 paralog protein complexes BCDX2 and CX3; the complexes have a ring-like structure arranged into a flat disc around a central channel. The BCDX2 complex consits of RAD51B, RAD51C, RAD51D and XRCC2; the CX3 complex consists of RAD51C and XRCC3. The BCDX2 subcomplex RAD51B:RAD51C interacts with RAD51. Interacts with SWSAP1; involved in homologous recombination repair. Interacts directly with PALB2 which may serve as a scaffold for a HR complex containing PALB2, BRCA2, RAD51C, RAD51 and XRCC3. Interacts with HELQ.

The protein localises to the nucleus. It localises to the cytoplasm. It is found in the perinuclear region. The protein resides in the mitochondrion. Its function is as follows. Essential for the homologous recombination (HR) pathway of DNA repair. Involved in the homologous recombination repair (HRR) pathway of double-stranded DNA breaks arising during DNA replication or induced by DNA-damaging agents. Part of the RAD51 paralog protein complexes BCDX2 and CX3 which act at different stages of the BRCA1-BRCA2-dependent HR pathway. Upon DNA damage, BCDX2 seems to act downstream of BRCA2 recruitment and upstream of RAD51 recruitment; CX3 seems to act downstream of RAD51 recruitment; both complexes bind predominantly to the intersection of the four duplex arms of the Holliday junction (HJ) and to junction of replication forks. The BCDX2 complex was originally reported to bind single-stranded DNA, single-stranded gaps in duplex DNA and specifically to nicks in duplex DNA. The BCDX2 subcomplex RAD51B:RAD51C exhibits single-stranded DNA-dependent ATPase activity suggesting an involvement in early stages of the HR pathway. Involved in RAD51 foci formation in response to DNA damage suggesting an involvement in early stages of HR probably in the invasion step. Has an early function in DNA repair in facilitating phosphorylation of the checkpoint kinase CHEK2 and thereby transduction of the damage signal, leading to cell cycle arrest and HR activation. Participates in branch migration and HJ resolution and thus is important for processing HR intermediates late in the DNA repair process; the function may be linked to the CX3 complex. Part of a PALB2-scaffolded HR complex containing BRCA2 and which is thought to play a role in DNA repair by HR. Protects RAD51 from ubiquitin-mediated degradation that is enhanced following DNA damage. Plays a role in regulating mitochondrial DNA copy number under conditions of oxidative stress in the presence of RAD51 and XRCC3. Contributes to DNA cross-link resistance, sister chromatid cohesion and genomic stability. Involved in maintaining centrosome number in mitosis. This Cricetulus griseus (Chinese hamster) protein is DNA repair protein RAD51 homolog 3 (RAD51C).